A 270-amino-acid polypeptide reads, in one-letter code: Probable endonuclease LCL3 (270 aa).

Residues phenylalanine 15 to tyrosine 37 form a helical membrane-spanning segment. In terms of domain architecture, TNase-like spans glutamine 58–glutamine 257. Arginine 147 is an active-site residue. Residue aspartate 152 participates in Ca(2+) binding. Catalysis depends on residues glutamate 155 and arginine 195.

This sequence belongs to the LCL3 family.

It localises to the mitochondrion. It is found in the membrane. This Kluyveromyces lactis (strain ATCC 8585 / CBS 2359 / DSM 70799 / NBRC 1267 / NRRL Y-1140 / WM37) (Yeast) protein is Probable endonuclease LCL3 (LCL3).